A 151-amino-acid polypeptide reads, in one-letter code: Ribosome maturation factor RimP (151 aa).

The protein belongs to the RimP family.

The protein localises to the cytoplasm. Required for maturation of 30S ribosomal subunits. In Crocosphaera subtropica (strain ATCC 51142 / BH68) (Cyanothece sp. (strain ATCC 51142)), this protein is Ribosome maturation factor RimP.